The primary structure comprises 167 residues: T-cell surface glycoprotein CD3 delta chain (167 aa).

Residues 1-21 (MEHSRCLSCLILAALLSQVNP) form the signal peptide. Residues 22–100 (RALEVLEAED…NCVELDSATL (79 aa)) are Extracellular-facing. Residues Cys-37 and Cys-73 are joined by a disulfide bond. Asn-38 and Asn-55 each carry an N-linked (GlcNAc...) asparagine glycan. Residues 101-121 (AGLIITDIIATVLLALGVYCF) form a helical membrane-spanning segment. Residues 122 to 167 (AGHETGRFSRAADTQVLMGNDQLYQPLRERNDAQYSRLGDKWARNK) are Cytoplasmic-facing. In terms of domain architecture, ITAM spans 134–162 (DTQVLMGNDQLYQPLRERNDAQYSRLGDK). Tyr-145 and Tyr-156 each carry phosphotyrosine.

The TCR-CD3 complex is composed of a CD3D/CD3E and a CD3G/CD3E heterodimers that preferentially associate with TCRalpha and TCRbeta, respectively, to form TCRalpha/CD3E/CD3G and TCRbeta/CD3G/CD3E trimers. In turn, the hexamer interacts with CD3Z homodimer to form the TCR-CD3 complex. Alternatively, TCRalpha and TCRbeta can be replaced by TCRgamma and TCRdelta. Interacts with coreceptors CD4 and CD8. Phosphorylated on Tyr residues after T-cell receptor triggering by LCK in association with CD4/CD8. In terms of tissue distribution, CD3D is mostly present on T-lymphocytes with its TCR-CD3 partners. Present also in fetal NK-cells.

It localises to the cell membrane. Its function is as follows. Part of the TCR-CD3 complex present on T-lymphocyte cell surface that plays an essential role in adaptive immune response. When antigen presenting cells (APCs) activate T-cell receptor (TCR), TCR-mediated signals are transmitted across the cell membrane by the CD3 chains CD3D, CD3E, CD3G and CD3Z. All CD3 chains contain immunoreceptor tyrosine-based activation motifs (ITAMs) in their cytoplasmic domain. Upon TCR engagement, these motifs become phosphorylated by Src family protein tyrosine kinases LCK and FYN, resulting in the activation of downstream signaling pathways. In addition of this role of signal transduction in T-cell activation, CD3D plays an essential role in thymocyte differentiation. Indeed, participates in correct intracellular TCR-CD3 complex assembly and surface expression. In absence of a functional TCR-CD3 complex, thymocytes are unable to differentiate properly. Interacts with CD4 and CD8 and thus serves to establish a functional link between the TCR and coreceptors CD4 and CD8, which is needed for activation and positive selection of CD4 or CD8 T-cells. The chain is T-cell surface glycoprotein CD3 delta chain (CD3D) from Ovis aries (Sheep).